Reading from the N-terminus, the 453-residue chain is Exopolyphosphatase PRUNE1 (453 aa).

At M1 the chain carries N-acetylmethionine. Residues D28, D30, D106, and D179 each coordinate Mn(2+). The DHH motif motif lies at 106 to 108; it reads DHH. The interval 393–420 is essential for homodimerization; sequence SLISGLSQDEEDPPLPPTPMNSLVDECP. Residues 395 to 421 form a disordered region; that stretch reads ISGLSQDEEDPPLPPTPMNSLVDECPL. S399 is modified (phosphoserine). T410 bears the Phosphothreonine mark. S414 is subject to Phosphoserine.

This sequence belongs to the PPase class C family. Prune subfamily. As to quaternary structure, homooligomer. Able to homodimerize via its C-terminal domain. Interacts with NME1. Interacts with GSK3; at focal adhesion complexes where paxillin and vinculin are colocalized. Interacts with alpha and beta tubulin. It depends on Mn(2+) as a cofactor. As to expression, ubiquitously expressed. Seems to be overexpressed in aggressive sarcoma subtypes, such as leiomyosarcomas and malignant fibrous histiocytomas (MFH) as well as in the less malignant liposarcomas.

It is found in the cytoplasm. The protein localises to the nucleus. It localises to the cell junction. The protein resides in the focal adhesion. It catalyses the reaction diphosphate + H2O = 2 phosphate + H(+). With respect to regulation, activated by magnesium ions and inhibited by manganese ions. Inhibited by dipyridamole, moderately sensitive to IBMX and inhibited by vinpocetine. Its function is as follows. Phosphodiesterase (PDE) that has higher activity toward cAMP than cGMP, as substrate. Plays a role in cell proliferation, migration and differentiation, and acts as a negative regulator of NME1. Plays a role in the regulation of neurogenesis. Involved in the regulation of microtubule polymerization. The chain is Exopolyphosphatase PRUNE1 from Homo sapiens (Human).